The following is a 350-amino-acid chain: Very-long-chain 3-oxoacyl-CoA reductase (350 aa).

A helical transmembrane segment spans residues 28–48 (SLVLLAGIGALSVGTFALRLV). NADP(+) is bound by residues Val79, Asp134, Asn161, Lys196, Tyr228, Lys232, Val261, and Ser263. Catalysis depends on Tyr228, which acts as the Proton donor. Lys232 serves as the catalytic Lowers pKa of active site Tyr.

Belongs to the short-chain dehydrogenases/reductases (SDR) family.

The protein localises to the endoplasmic reticulum membrane. It catalyses the reaction a very-long-chain (3R)-3-hydroxyacyl-CoA + NADP(+) = a very-long-chain 3-oxoacyl-CoA + NADPH + H(+). Its pathway is lipid metabolism; fatty acid biosynthesis. Functionally, component of the microsomal membrane bound fatty acid elongation system, which produces the 26-carbon very long-chain fatty acids (VLCFA) from palmitate. Catalyzes the reduction of the 3-ketoacyl-CoA intermediate that is formed in each cycle of fatty acid elongation. VLCFAs serve as precursors for ceramide and sphingolipids. The polypeptide is Very-long-chain 3-oxoacyl-CoA reductase (Mycosarcoma maydis (Corn smut fungus)).